We begin with the raw amino-acid sequence, 771 residues long: Hyperosmolality-gated Ca2+ permeable channel 1.2 (771 aa).

Topologically, residues Met1–Leu4 are extracellular. A helical membrane pass occupies residues Gln5 to Val27. Over Leu28–Arg100 the chain is Cytoplasmic. The chain crosses the membrane as a helical span at residues Ile101–Trp125. Topologically, residues Thr126–Ser156 are extracellular. A helical membrane pass occupies residues Met157–Met178. At Lys179–Arg374 the chain is on the cytoplasmic side. Residues Arg375 to Thr401 traverse the membrane as a helical segment. Residues Ile402 to Lys419 lie on the Extracellular side of the membrane. A helical transmembrane segment spans residues Phe420–Leu445. The Cytoplasmic portion of the chain corresponds to Met446 to Arg462. Residues Arg463–Ala485 form a helical membrane-spanning segment. Residues Ala486 to Thr504 lie on the Extracellular side of the membrane. The chain crosses the membrane as a helical span at residues Ile505–Leu533. At Met534 to Phe566 the chain is on the cytoplasmic side. The chain crosses the membrane as a helical span at residues Asn567–Pro588. Residue Met589 is a topological domain, extracellular. A helical membrane pass occupies residues Leu590–Tyr605. The Cytoplasmic portion of the chain corresponds to Arg606–Pro625. The helical transmembrane segment at Asp626–Thr648 threads the bilayer. The Extracellular segment spans residues Lys649–Ala651. Residues Ala652–His670 traverse the membrane as a helical segment. Residues Phe671–Val771 lie on the Cytoplasmic side of the membrane. The interval Pro741–Val771 is disordered.

Belongs to the CSC1 (TC 1.A.17) family. As to quaternary structure, homodimer.

It is found in the membrane. Activated by hyperosmotic shock after mannitol or NaCl treatment. Activated by mechanical pressure: activated in response to membrane stretch and poke. Membrane lipids play a key role in mechanosensation by acting as a wall mainly formed by lipid head groups. Functionally, acts as an osmosensitive calcium-permeable cation channel. Specifically conducts cations including Ca(2+), K(+) and Na(+) in vitro. Inactivation or closure of the channel is calcium-dependent. Mechanosensitive ion channel that converts mechanical stimuli into a flow of ions: activated in response to membrane stretch and poke. The chain is Hyperosmolality-gated Ca2+ permeable channel 1.2 from Arabidopsis thaliana (Mouse-ear cress).